Reading from the N-terminus, the 327-residue chain is Metapyrocatechase (327 aa).

VOC domains are found at residues 14-126 (QLAH…IFFE) and 156-276 (RLDH…LFGD). Fe cation-binding residues include His159, His221, and Glu272.

The protein belongs to the extradiol ring-cleavage dioxygenase family. It depends on Fe(2+) as a cofactor.

The enzyme catalyses catechol + O2 = (2Z,4E)-2-hydroxy-6-oxohexa-2,4-dienoate + H(+). The polypeptide is Metapyrocatechase (pheB) (Geobacillus stearothermophilus (Bacillus stearothermophilus)).